Consider the following 439-residue polypeptide: Serine/threonine-protein kinase 2 (439 aa).

A Protein kinase domain is found at asparagine 87–asparagine 439. ATP contacts are provided by residues isoleucine 93–valine 101 and lysine 117. The active-site Proton acceptor is aspartate 307.

The protein belongs to the protein kinase superfamily. Ser/Thr protein kinase family. Phosphorylated in vivo. Autophosphorylated in vitro.

The protein localises to the host endoplasmic reticulum. The protein resides in the host endoplasmic reticulum-Golgi intermediate compartment. It catalyses the reaction L-seryl-[protein] + ATP = O-phospho-L-seryl-[protein] + ADP + H(+). It carries out the reaction L-threonyl-[protein] + ATP = O-phospho-L-threonyl-[protein] + ADP + H(+). Essential serine-protein kinase involved in the early stage of virion morphogenesis. This is Serine/threonine-protein kinase 2 (OPG054) from Bos taurus (Bovine).